We begin with the raw amino-acid sequence, 706 residues long: Catalase HPII (706 aa).

Catalysis depends on residues histidine 77 and asparagine 151. Tyrosine 365 serves as a coordination point for heme. The interval 512–532 (EPPEEQVDESAPVSPALSQVT) is disordered.

The protein belongs to the catalase family. HPII subfamily. It depends on heme as a cofactor.

It localises to the cytoplasm. It catalyses the reaction 2 H2O2 = O2 + 2 H2O. In terms of biological role, decomposes hydrogen peroxide into water and oxygen; serves to protect cells from the toxic effects of hydrogen peroxide. This is Catalase HPII (katE) from Mycobacterium avium.